Here is a 551-residue protein sequence, read N- to C-terminus: Arginine--tRNA ligase (551 aa).

Residues 123 to 133 carry the 'HIGH' region motif; the sequence is ANPTGPLTIGR.

The protein belongs to the class-I aminoacyl-tRNA synthetase family. In terms of assembly, monomer.

It localises to the cytoplasm. The catalysed reaction is tRNA(Arg) + L-arginine + ATP = L-arginyl-tRNA(Arg) + AMP + diphosphate. In Chlorobium limicola (strain DSM 245 / NBRC 103803 / 6330), this protein is Arginine--tRNA ligase.